We begin with the raw amino-acid sequence, 134 residues long: MWSDPIADMLTRIRNANAAFKESVDLPASNMKRAILEILKKEGYIEDYKYIEDGKQGILKVFLKYKGDRRNRQRVISGIVRVSKPGRRIYVSKDELPKVKSGMGIAVISTSKGIITDKEARKKNVGGEVICYVW.

This sequence belongs to the universal ribosomal protein uS8 family. As to quaternary structure, part of the 30S ribosomal subunit. Contacts proteins S5 and S12.

Functionally, one of the primary rRNA binding proteins, it binds directly to 16S rRNA central domain where it helps coordinate assembly of the platform of the 30S subunit. The chain is Small ribosomal subunit protein uS8 from Kosmotoga olearia (strain ATCC BAA-1733 / DSM 21960 / TBF 19.5.1).